Reading from the N-terminus, the 396-residue chain is Ribosomal RNA large subunit methyltransferase I (396 aa).

The region spanning 2–81 (SVRLVLAKGR…ESIDIAFFTR (80 aa)) is the PUA domain.

It belongs to the methyltransferase superfamily. RlmI family.

It localises to the cytoplasm. The enzyme catalyses cytidine(1962) in 23S rRNA + S-adenosyl-L-methionine = 5-methylcytidine(1962) in 23S rRNA + S-adenosyl-L-homocysteine + H(+). Functionally, specifically methylates the cytosine at position 1962 (m5C1962) of 23S rRNA. In Escherichia coli (strain UTI89 / UPEC), this protein is Ribosomal RNA large subunit methyltransferase I.